Consider the following 537-residue polypeptide: CTP synthase (537 aa).

Residues Met1–Leu268 form an amidoligase domain region. Ser14 lines the CTP pocket. A UTP-binding site is contributed by Ser14. ATP is bound by residues Ser15–Leu20 and Asp72. Asp72 and Glu142 together coordinate Mg(2+). Residues Asp149–Glu151, Lys188–Gln193, and Lys224 contribute to the CTP site. UTP contacts are provided by residues Lys188 to Gln193 and Lys224. The region spanning Lys293–Asp533 is the Glutamine amidotransferase type-1 domain. Gly352 serves as a coordination point for L-glutamine. Residue Cys379 is the Nucleophile; for glutamine hydrolysis of the active site. L-glutamine is bound by residues Leu380–Gln383, Glu403, and Arg461. Residues His506 and Glu508 contribute to the active site.

Belongs to the CTP synthase family. As to quaternary structure, homotetramer.

The catalysed reaction is UTP + L-glutamine + ATP + H2O = CTP + L-glutamate + ADP + phosphate + 2 H(+). It carries out the reaction L-glutamine + H2O = L-glutamate + NH4(+). The enzyme catalyses UTP + NH4(+) + ATP = CTP + ADP + phosphate + 2 H(+). Its pathway is pyrimidine metabolism; CTP biosynthesis via de novo pathway; CTP from UDP: step 2/2. Its activity is regulated as follows. Allosterically activated by GTP, when glutamine is the substrate; GTP has no effect on the reaction when ammonia is the substrate. The allosteric effector GTP functions by stabilizing the protein conformation that binds the tetrahedral intermediate(s) formed during glutamine hydrolysis. Inhibited by the product CTP, via allosteric rather than competitive inhibition. Catalyzes the ATP-dependent amination of UTP to CTP with either L-glutamine or ammonia as the source of nitrogen. Regulates intracellular CTP levels through interactions with the four ribonucleotide triphosphates. In Chlamydia pneumoniae (Chlamydophila pneumoniae), this protein is CTP synthase.